A 78-amino-acid chain; its full sequence is MSRVCQVTGKRPAVGNNRSHALNATRRRFLPNLHTHRFWVESENRFVTLRLTAKGMRIIDKKGIDAVLADIRARGEKI.

A disordered region spans residues 1 to 20 (MSRVCQVTGKRPAVGNNRSH).

It belongs to the bacterial ribosomal protein bL28 family.

This chain is Large ribosomal subunit protein bL28, found in Actinobacillus succinogenes (strain ATCC 55618 / DSM 22257 / CCUG 43843 / 130Z).